Here is a 362-residue protein sequence, read N- to C-terminus: Chorismate synthase (362 aa).

Arginine 48 and arginine 54 together coordinate NADP(+). FMN contacts are provided by residues 125–127 (RSS), 238–239 (NA), glycine 278, 293–297 (KPTSS), and arginine 319.

It belongs to the chorismate synthase family. In terms of assembly, homotetramer. FMNH2 serves as cofactor.

It catalyses the reaction 5-O-(1-carboxyvinyl)-3-phosphoshikimate = chorismate + phosphate. The protein operates within metabolic intermediate biosynthesis; chorismate biosynthesis; chorismate from D-erythrose 4-phosphate and phosphoenolpyruvate: step 7/7. Its function is as follows. Catalyzes the anti-1,4-elimination of the C-3 phosphate and the C-6 proR hydrogen from 5-enolpyruvylshikimate-3-phosphate (EPSP) to yield chorismate, which is the branch point compound that serves as the starting substrate for the three terminal pathways of aromatic amino acid biosynthesis. This reaction introduces a second double bond into the aromatic ring system. This is Chorismate synthase from Tolumonas auensis (strain DSM 9187 / NBRC 110442 / TA 4).